The following is a 652-amino-acid chain: DNA ligase (652 aa).

NAD(+)-binding positions include 29–33 (DAEYD), 78–79 (SL), and glutamate 107. The N6-AMP-lysine intermediate role is filled by lysine 109. Positions 130, 164, 278, and 302 each coordinate NAD(+). The Zn(2+) site is built by cysteine 395, cysteine 398, cysteine 413, and cysteine 418. The region spanning 577–652 (ASDAALTGMT…IKDEAWLESL (76 aa)) is the BRCT domain.

This sequence belongs to the NAD-dependent DNA ligase family. LigA subfamily. Mg(2+) is required as a cofactor. It depends on Mn(2+) as a cofactor.

It carries out the reaction NAD(+) + (deoxyribonucleotide)n-3'-hydroxyl + 5'-phospho-(deoxyribonucleotide)m = (deoxyribonucleotide)n+m + AMP + beta-nicotinamide D-nucleotide.. Its function is as follows. DNA ligase that catalyzes the formation of phosphodiester linkages between 5'-phosphoryl and 3'-hydroxyl groups in double-stranded DNA using NAD as a coenzyme and as the energy source for the reaction. It is essential for DNA replication and repair of damaged DNA. In Streptococcus mutans serotype c (strain ATCC 700610 / UA159), this protein is DNA ligase.